The following is a 101-amino-acid chain: Small integral membrane protein 21 (101 aa).

Residues 49 to 65 (HIRFFTLLVLFHVMVLL) traverse the membrane as a helical segment.

It is found in the membrane. The protein is Small integral membrane protein 21 (SMIM21) of Homo sapiens (Human).